Reading from the N-terminus, the 186-residue chain is ADP-ribosylation factor-like protein alp41 (186 aa).

Gly-2 is lipidated: N-myristoyl glycine. Residues 23–30 (GLDNAGKT), 66–70 (DIGGQ), and 125–128 (NKSD) contribute to the GTP site.

This sequence belongs to the small GTPase superfamily. Arf family.

The protein localises to the cytoplasm. Its subcellular location is the cytoskeleton. In terms of biological role, has a role in the cofactor-dependent pathway of microtubule biogenesis. Required for growth polarity control. This Schizosaccharomyces pombe (strain 972 / ATCC 24843) (Fission yeast) protein is ADP-ribosylation factor-like protein alp41 (alp41).